The chain runs to 94 residues: PqqA binding protein (94 aa).

Belongs to the PqqD family. As to quaternary structure, monomer. Interacts with PqqE.

The protein operates within cofactor biosynthesis; pyrroloquinoline quinone biosynthesis. Functions as a PqqA binding protein and presents PqqA to PqqE, in the pyrroloquinoline quinone (PQQ) biosynthetic pathway. This chain is PqqA binding protein, found in Acinetobacter baumannii (strain AB307-0294).